The following is a 330-amino-acid chain: Aspartate--ammonia ligase (330 aa).

Belongs to the class-II aminoacyl-tRNA synthetase family. AsnA subfamily.

It localises to the cytoplasm. It carries out the reaction L-aspartate + NH4(+) + ATP = L-asparagine + AMP + diphosphate + H(+). It functions in the pathway amino-acid biosynthesis; L-asparagine biosynthesis; L-asparagine from L-aspartate (ammonia route): step 1/1. The protein is Aspartate--ammonia ligase of Escherichia fergusonii (strain ATCC 35469 / DSM 13698 / CCUG 18766 / IAM 14443 / JCM 21226 / LMG 7866 / NBRC 102419 / NCTC 12128 / CDC 0568-73).